Here is a 56-residue protein sequence, read N- to C-terminus: Hydrophobic protein LTI6A (56 aa).

2 consecutive transmembrane segments (helical) span residues 11–31 (IILA…CGIE) and 34–54 (ICLL…VWVI).

The protein belongs to the UPF0057 (PMP3) family. Expressed in shoot of cold stressed seedlings.

The protein localises to the membrane. Its function is as follows. Plays a role in the regulation of membrane potential. Could mediate a proton leak. The protein is Hydrophobic protein LTI6A (LTI6A) of Oryza sativa subsp. japonica (Rice).